The following is a 278-amino-acid chain: 4-diphosphocytidyl-2-C-methyl-D-erythritol kinase (278 aa).

The active site involves Lys-9. Residue Pro-89–Ala-99 coordinates ATP. The active site involves Asp-128.

Belongs to the GHMP kinase family. IspE subfamily.

The catalysed reaction is 4-CDP-2-C-methyl-D-erythritol + ATP = 4-CDP-2-C-methyl-D-erythritol 2-phosphate + ADP + H(+). Its pathway is isoprenoid biosynthesis; isopentenyl diphosphate biosynthesis via DXP pathway; isopentenyl diphosphate from 1-deoxy-D-xylulose 5-phosphate: step 3/6. Functionally, catalyzes the phosphorylation of the position 2 hydroxy group of 4-diphosphocytidyl-2C-methyl-D-erythritol. The chain is 4-diphosphocytidyl-2-C-methyl-D-erythritol kinase from Cereibacter sphaeroides (strain KD131 / KCTC 12085) (Rhodobacter sphaeroides).